We begin with the raw amino-acid sequence, 318 residues long: L-carnitine dehydrogenase (318 aa).

NAD(+) is bound at residue 14–19; it reads GAGVIG.

Belongs to the 3-hydroxyacyl-CoA dehydrogenase family. L-carnitine dehydrogenase subfamily. Homodimer.

It localises to the cytoplasm. The catalysed reaction is carnitine + NAD(+) = 3-dehydrocarnitine + NADH + H(+). Its pathway is amine and polyamine metabolism; carnitine metabolism. Catalyzes the NAD(+)-dependent oxidation of L-carnitine to 3-dehydrocarnitine. This Streptomyces coelicolor (strain ATCC BAA-471 / A3(2) / M145) protein is L-carnitine dehydrogenase.